Here is a 395-residue protein sequence, read N- to C-terminus: Probable alcohol dehydrogenase EutG (395 aa).

Residues D57, 116–120 (GSVLD), 156–160 (TTAGT), K178, and 197–201 (VTEGV) contribute to the NAD(+) site. Residues D212, H216, H281, and H295 each contribute to the Fe cation site. Residues H295 and D354 each coordinate NAD(+).

This sequence belongs to the iron-containing alcohol dehydrogenase family. Fe cation serves as cofactor.

The protein localises to the bacterial microcompartment. It carries out the reaction ethanol + NAD(+) = acetaldehyde + NADH + H(+). It participates in amine and polyamine degradation; ethanolamine degradation. In terms of biological role, probably acts on the acetaldehyde produced by the degradation of ethanolamine, producing ethanol. Functionally, expression of the eut operon allows this bacteria to use ethanolamine (EA) as a carbon, nitrogen and energy source. It relies on cobalamin (vitamin B12) both as a cofactor for the ethanolamine ammonia-lyase (EAL) activity and to induce the operon. EA enhances bacterial survival in macrophages in a concentration-dependent manner, suggesting it is an important nutrient during infection. This is Probable alcohol dehydrogenase EutG from Salmonella typhimurium (strain LT2 / SGSC1412 / ATCC 700720).